A 947-amino-acid chain; its full sequence is Protein NETWORKED 2A (947 aa).

The NAB domain occupies 10-90 (YSWWWASHIR…ERYDHLSREL (81 aa)). Residues 105-131 (VQFPLEDDSDENEDYDGRPRKPPKHLH) are disordered. Acidic residues predominate over residues 109 to 118 (LEDDSDENED). 2 coiled-coil regions span residues 348–454 (KLAE…IQDV) and 568–619 (VLRD…QKLD). Composition is skewed to basic and acidic residues over residues 618-627 (LDTTGKDSPH) and 635-644 (LEHEQGHHET). 3 disordered regions span residues 618–675 (LDTT…RTKS), 743–763 (RIES…AVAS), and 911–947 (KNRQ…KLPE). Positions 645–660 (VSISPTSNFSVATTPH) are enriched in polar residues. Basic and acidic residues predominate over residues 662–675 (QVGDVKRTPGRTKS). Positions 722–809 (VHQIQKYQTT…LANIQEEIAR (88 aa)) form a coiled coil. 2 stretches are compositionally biased toward polar residues: residues 749-761 (QQES…NTAV) and 915-927 (QKQS…SCVS).

Belongs to the NET family. As to expression, expressed specifically in pollen.

The protein localises to the cell membrane. Its function is as follows. Plant-specific actin binding protein. Associates with F-actin at the plasma membrane in growing pollen tubes. May be part of a membrane-cytoskeletal adapter complex. This is Protein NETWORKED 2A from Arabidopsis thaliana (Mouse-ear cress).